Consider the following 779-residue polypeptide: LPS-assembly protein LptD (779 aa).

The first 23 residues, 1–23 (MKIRYSVLSTFIISALYSQDTQA), serve as a signal peptide directing secretion.

The protein belongs to the LptD family. In terms of assembly, component of the lipopolysaccharide transport and assembly complex. Interacts with LptE and LptA.

The protein localises to the cell outer membrane. Functionally, together with LptE, is involved in the assembly of lipopolysaccharide (LPS) at the surface of the outer membrane. The chain is LPS-assembly protein LptD from Haemophilus ducreyi (strain 35000HP / ATCC 700724).